Reading from the N-terminus, the 143-residue chain is Nucleoside diphosphate kinase (143 aa).

Residues Lys11, Phe59, Arg87, Thr93, Arg104, and Asn114 each coordinate ATP. His117 acts as the Pros-phosphohistidine intermediate in catalysis.

Belongs to the NDK family. Homotetramer. It depends on Mg(2+) as a cofactor.

It localises to the cytoplasm. The catalysed reaction is a 2'-deoxyribonucleoside 5'-diphosphate + ATP = a 2'-deoxyribonucleoside 5'-triphosphate + ADP. The enzyme catalyses a ribonucleoside 5'-diphosphate + ATP = a ribonucleoside 5'-triphosphate + ADP. Functionally, major role in the synthesis of nucleoside triphosphates other than ATP. The ATP gamma phosphate is transferred to the NDP beta phosphate via a ping-pong mechanism, using a phosphorylated active-site intermediate. The protein is Nucleoside diphosphate kinase of Shewanella halifaxensis (strain HAW-EB4).